Consider the following 469-residue polypeptide: MKRSTVVIRPSARALSRQASSQSFLLARSSALTSRQRRLYSTHPPNARLNLPIDYATTPLLAHTSQAALSNPELPASVRNGTTKRMNLFQAINDALSTALAEDESVLIFGEDVAFGGVFRCTTKLAETYGGDRVFNTPLTEQGIMGFAIGAAAEGMRPVAEIQFADYVFPAFDQLVNEAAKFRYRDGAGGRSAGGLTVRMPCGGVGHGALYHSQSPEALFTHIPGLKVIIPRGPVQAKGLLLAAIRSNDPCVVMEPKILYRAAVEQVPTTAYELPLGKAEILKEGKDVTVVSYGQPLYKCMAALKAAEQDFGVSVELIDLRTIYPWDKETVFNSVRKTGRCVVVHEAMVNAGVGAEVAAAIQEDPETFVRLEAPVARIAGWSIPTPLVFEQFNLPDVTSKCYLTLGLADVYADGMPRDIRRHQKGDEFLRDLSMNSGILKQSMLHSSRRGVDWLMGIVLDDIILSVFLV.

The N-terminal 40 residues, 1 to 40 (MKRSTVVIRPSARALSRQASSQSFLLARSSALTSRQRRLY), are a transit peptide targeting the mitochondrion. Tyrosine 167 contacts thiamine diphosphate. The K(+) site is built by glycine 194, leucine 196, and threonine 197.

In terms of assembly, heterotetramer of 2 alpha and 2 beta chains. It depends on thiamine diphosphate as a cofactor.

Its subcellular location is the mitochondrion matrix. The enzyme catalyses N(6)-[(R)-lipoyl]-L-lysyl-[protein] + 3-methyl-2-oxobutanoate + H(+) = N(6)-[(R)-S(8)-2-methylpropanoyldihydrolipoyl]-L-lysyl-[protein] + CO2. Functionally, the branched-chain alpha-keto dehydrogenase complex catalyzes the overall conversion of alpha-keto acids to acyl-CoA and CO(2). It contains multiple copies of three enzymatic components: branched-chain alpha-keto acid decarboxylase (E1), lipoamide acyltransferase (E2) and lipoamide dehydrogenase (E3). In Chaetomium thermophilum (strain DSM 1495 / CBS 144.50 / IMI 039719) (Thermochaetoides thermophila), this protein is 2-oxoisovalerate dehydrogenase subunit beta, mitochondrial.